The chain runs to 262 residues: Purine nucleoside phosphorylase SSP1584 (262 aa).

His79, Cys124, and His141 together coordinate Zn(2+).

Belongs to the purine nucleoside phosphorylase YfiH/LACC1 family. As to quaternary structure, homodimer. Cu(2+) serves as cofactor. Zn(2+) is required as a cofactor.

The enzyme catalyses adenosine + phosphate = alpha-D-ribose 1-phosphate + adenine. It carries out the reaction S-methyl-5'-thioadenosine + phosphate = 5-(methylsulfanyl)-alpha-D-ribose 1-phosphate + adenine. It catalyses the reaction inosine + phosphate = alpha-D-ribose 1-phosphate + hypoxanthine. The catalysed reaction is adenosine + H2O + H(+) = inosine + NH4(+). In terms of biological role, purine nucleoside enzyme that catalyzes the phosphorolysis of adenosine and inosine nucleosides, yielding D-ribose 1-phosphate and the respective free bases, adenine and hypoxanthine. Also catalyzes the phosphorolysis of S-methyl-5'-thioadenosine into adenine and S-methyl-5-thio-alpha-D-ribose 1-phosphate. Also has adenosine deaminase activity. The polypeptide is Purine nucleoside phosphorylase SSP1584 (Staphylococcus saprophyticus subsp. saprophyticus (strain ATCC 15305 / DSM 20229 / NCIMB 8711 / NCTC 7292 / S-41)).